The following is a 247-amino-acid chain: MKFLLSNDDGYFAPGLAMLAQTLQRYGEVVVVAPERDRSGASNSLTLDRPLTVRKAANGFHYVNGTPTDCVHLAVTGFLDFRPNMIFTGINHGPNMGDDTLYSGTVAAATEGFMLGIPSVAVSLAGHSGKHFASAGKVVEQLVERCLEEPFQQPVLLNVNVPDAPPEEVGALQVTRLGRRHAAQPVIKSQNPRGETIYWVGPVGAVQDAGAGTDFGCVASKQVSVTPLMLDLTAYGQLDRISTWLHR.

Residues D8, D9, S39, and N91 each contribute to the a divalent metal cation site.

Belongs to the SurE nucleotidase family. A divalent metal cation serves as cofactor.

Its subcellular location is the cytoplasm. It carries out the reaction a ribonucleoside 5'-phosphate + H2O = a ribonucleoside + phosphate. In terms of biological role, nucleotidase that shows phosphatase activity on nucleoside 5'-monophosphates. This Chromobacterium violaceum (strain ATCC 12472 / DSM 30191 / JCM 1249 / CCUG 213 / NBRC 12614 / NCIMB 9131 / NCTC 9757 / MK) protein is 5'-nucleotidase SurE.